The sequence spans 394 residues: DNA replication and repair protein RecF (394 aa).

Residue Gly30–Thr37 participates in ATP binding.

This sequence belongs to the RecF family.

The protein localises to the cytoplasm. Functionally, the RecF protein is involved in DNA metabolism; it is required for DNA replication and normal SOS inducibility. RecF binds preferentially to single-stranded, linear DNA. It also seems to bind ATP. This Cutibacterium acnes (strain DSM 16379 / KPA171202) (Propionibacterium acnes) protein is DNA replication and repair protein RecF.